The sequence spans 385 residues: S-adenosylmethionine synthase (385 aa).

His16 serves as a coordination point for ATP. Residue Asp18 participates in Mg(2+) binding. Glu44 lines the K(+) pocket. 2 residues coordinate L-methionine: Glu57 and Gln100. The flexible loop stretch occupies residues 100–110; it reads QSPDINQGVDR. ATP-binding positions include 164 to 166, 230 to 231, Asp239, 245 to 246, Ala262, and Lys266; these read DGK, KF, and RK. An L-methionine-binding site is contributed by Asp239. Lys270 lines the L-methionine pocket.

It belongs to the AdoMet synthase family. As to quaternary structure, homotetramer; dimer of dimers. Mg(2+) serves as cofactor. Requires K(+) as cofactor.

The protein resides in the cytoplasm. It catalyses the reaction L-methionine + ATP + H2O = S-adenosyl-L-methionine + phosphate + diphosphate. The protein operates within amino-acid biosynthesis; S-adenosyl-L-methionine biosynthesis; S-adenosyl-L-methionine from L-methionine: step 1/1. In terms of biological role, catalyzes the formation of S-adenosylmethionine (AdoMet) from methionine and ATP. The overall synthetic reaction is composed of two sequential steps, AdoMet formation and the subsequent tripolyphosphate hydrolysis which occurs prior to release of AdoMet from the enzyme. This chain is S-adenosylmethionine synthase, found in Helicobacter pylori (strain HPAG1).